The primary structure comprises 143 residues: D-aminoacyl-tRNA deacylase (143 aa).

Positions 135–136 (GP) match the Gly-cisPro motif, important for rejection of L-amino acids motif.

This sequence belongs to the DTD family. Homodimer.

The protein localises to the cytoplasm. It catalyses the reaction glycyl-tRNA(Ala) + H2O = tRNA(Ala) + glycine + H(+). The enzyme catalyses a D-aminoacyl-tRNA + H2O = a tRNA + a D-alpha-amino acid + H(+). Functionally, an aminoacyl-tRNA editing enzyme that deacylates mischarged D-aminoacyl-tRNAs. Also deacylates mischarged glycyl-tRNA(Ala), protecting cells against glycine mischarging by AlaRS. Acts via tRNA-based rather than protein-based catalysis; rejects L-amino acids rather than detecting D-amino acids in the active site. By recycling D-aminoacyl-tRNA to D-amino acids and free tRNA molecules, this enzyme counteracts the toxicity associated with the formation of D-aminoacyl-tRNA entities in vivo and helps enforce protein L-homochirality. The polypeptide is D-aminoacyl-tRNA deacylase (Mycobacterium marinum (strain ATCC BAA-535 / M)).